The following is a 309-amino-acid chain: Ubiquitin-conjugating enzyme E2 32 (309 aa).

One can recognise a UBC core domain in the interval 11-166 (PAVKRILQEV…ERQKIIDEIH (156 aa)). The Glycyl thioester intermediate role is filled by C93. The helical transmembrane segment at 275-295 (FTWAAVGLTIAIMVLLLKKFI) threads the bilayer.

It belongs to the ubiquitin-conjugating enzyme family.

The protein localises to the membrane. It carries out the reaction S-ubiquitinyl-[E1 ubiquitin-activating enzyme]-L-cysteine + [E2 ubiquitin-conjugating enzyme]-L-cysteine = [E1 ubiquitin-activating enzyme]-L-cysteine + S-ubiquitinyl-[E2 ubiquitin-conjugating enzyme]-L-cysteine.. Its pathway is protein modification; protein ubiquitination. Accepts the ubiquitin from the E1 complex and catalyzes its covalent attachment to other proteins. The protein is Ubiquitin-conjugating enzyme E2 32 (UBC32) of Arabidopsis thaliana (Mouse-ear cress).